A 125-amino-acid polypeptide reads, in one-letter code: Holo-[acyl-carrier-protein] synthase (125 aa).

Residues Asp8 and Glu60 each contribute to the Mg(2+) site.

It belongs to the P-Pant transferase superfamily. AcpS family. Mg(2+) serves as cofactor.

The protein resides in the cytoplasm. The enzyme catalyses apo-[ACP] + CoA = holo-[ACP] + adenosine 3',5'-bisphosphate + H(+). Functionally, transfers the 4'-phosphopantetheine moiety from coenzyme A to a Ser of acyl-carrier-protein. The protein is Holo-[acyl-carrier-protein] synthase of Wolbachia sp. subsp. Brugia malayi (strain TRS).